The sequence spans 488 residues: L-arabinose isomerase 2 (488 aa).

Positions 306, 331, 348, and 447 each coordinate Mn(2+).

It belongs to the arabinose isomerase family. The cofactor is Mn(2+).

It carries out the reaction beta-L-arabinopyranose = L-ribulose. It participates in carbohydrate degradation; L-arabinose degradation via L-ribulose; D-xylulose 5-phosphate from L-arabinose (bacterial route): step 1/3. Catalyzes the conversion of L-arabinose to L-ribulose. This is L-arabinose isomerase 2 from Clostridium acetobutylicum (strain ATCC 824 / DSM 792 / JCM 1419 / IAM 19013 / LMG 5710 / NBRC 13948 / NRRL B-527 / VKM B-1787 / 2291 / W).